The chain runs to 181 residues: MPRSGRLVLVVGPSGAGKDTVLREARRRLGHAPDIVFPRRVITRPPDPAEDHEPVSDDEFQRRAFALSWSAHGLSYGIPASIVGDLDAGRIVVVNVSRAIVADARRRFPCFVVAVTAAPAILAARLAVRRRETAAEIGARLARAAAPVEADAVVANETTPEAAGAAFLGILLRCRDLPCLP.

12 to 19 (GPSGAGKD) contacts ATP.

It belongs to the ribose 1,5-bisphosphokinase family.

It catalyses the reaction alpha-D-ribose 1,5-bisphosphate + ATP = 5-phospho-alpha-D-ribose 1-diphosphate + ADP. It participates in metabolic intermediate biosynthesis; 5-phospho-alpha-D-ribose 1-diphosphate biosynthesis; 5-phospho-alpha-D-ribose 1-diphosphate from D-ribose 5-phosphate (route II): step 3/3. Functionally, catalyzes the phosphorylation of ribose 1,5-bisphosphate to 5-phospho-D-ribosyl alpha-1-diphosphate (PRPP). This Acidiphilium cryptum (strain JF-5) protein is Ribose 1,5-bisphosphate phosphokinase PhnN.